The primary structure comprises 379 residues: Lipid-A-disaccharide synthase (379 aa).

This sequence belongs to the LpxB family.

The enzyme catalyses a lipid X + a UDP-2-N,3-O-bis[(3R)-3-hydroxyacyl]-alpha-D-glucosamine = a lipid A disaccharide + UDP + H(+). It functions in the pathway bacterial outer membrane biogenesis; LPS lipid A biosynthesis. Functionally, condensation of UDP-2,3-diacylglucosamine and 2,3-diacylglucosamine-1-phosphate to form lipid A disaccharide, a precursor of lipid A, a phosphorylated glycolipid that anchors the lipopolysaccharide to the outer membrane of the cell. The sequence is that of Lipid-A-disaccharide synthase from Vibrio cholerae serotype O1 (strain ATCC 39541 / Classical Ogawa 395 / O395).